The following is a 202-amino-acid chain: Holliday junction branch migration complex subunit RuvA (202 aa).

Residues 1–64 are domain I; it reads MIGRLRGSLA…EDAHLLYGFY (64 aa). The tract at residues 65–143 is domain II; that stretch reads EKRERELFRE…AWEALPGTFT (79 aa). The segment at 144-153 is flexible linker; sequence LVSNGPNQAE. The segment at 154–202 is domain III; that stretch reads PVASAESDAVSALISLGYKPQEASKAVSAIKEKDLSSADLIRRALKGMG.

It belongs to the RuvA family. Homotetramer. Forms an RuvA(8)-RuvB(12)-Holliday junction (HJ) complex. HJ DNA is sandwiched between 2 RuvA tetramers; dsDNA enters through RuvA and exits via RuvB. An RuvB hexamer assembles on each DNA strand where it exits the tetramer. Each RuvB hexamer is contacted by two RuvA subunits (via domain III) on 2 adjacent RuvB subunits; this complex drives branch migration. In the full resolvosome a probable DNA-RuvA(4)-RuvB(12)-RuvC(2) complex forms which resolves the HJ.

It is found in the cytoplasm. Functionally, the RuvA-RuvB-RuvC complex processes Holliday junction (HJ) DNA during genetic recombination and DNA repair, while the RuvA-RuvB complex plays an important role in the rescue of blocked DNA replication forks via replication fork reversal (RFR). RuvA specifically binds to HJ cruciform DNA, conferring on it an open structure. The RuvB hexamer acts as an ATP-dependent pump, pulling dsDNA into and through the RuvAB complex. HJ branch migration allows RuvC to scan DNA until it finds its consensus sequence, where it cleaves and resolves the cruciform DNA. The sequence is that of Holliday junction branch migration complex subunit RuvA from Pseudomonas syringae pv. syringae (strain B728a).